The chain runs to 266 residues: Aquaporin TIP3-2 (266 aa).

2 helical membrane-spanning segments follow: residues 29–49 (AAIS…GSVL) and 66–86 (GLVA…AVAV). The short motif at 94-96 (NPA) is the NPA 1 element. Transmembrane regions (helical) follow at residues 109 to 129 (LVRA…ATLL), 153 to 173 (AVLL…ATVV), and 180 to 200 (LGTI…LAGG). The short motif at 208-210 (NPA) is the NPA 2 element. A helical transmembrane segment spans residues 228-248 (YWLGPFLGAGLAGLVYEYLLI).

This sequence belongs to the MIP/aquaporin (TC 1.A.8) family. TIP (TC 1.A.8.10) subfamily.

Its subcellular location is the vacuole membrane. In terms of biological role, aquaporins facilitate the transport of water and small neutral solutes across cell membranes. The protein is Aquaporin TIP3-2 (TIP3-2) of Zea mays (Maize).